The chain runs to 2499 residues: Probable polyketide synthase 23 (2499 aa).

Positions 11-430 (DNQVAIVGLG…GSNACVLLSE (420 aa)) constitute a Ketosynthase family 3 (KS3) domain. Catalysis depends on for beta-ketoacyl synthase activity residues C177, H316, and H354. The segment at 623–656 (GITPSIIVGHSLGEVASAFCSGMIDLETACFVIY) is acyl/malonyl transferases. The active-site For acyl/malonyl transferase activity is S633. The segment at 924-1044 (INQLGNKNEL…SRILMKSLDV (121 aa)) is N-terminal hotdog fold. Positions 924–1209 (INQLGNKNEL…IASTLSTNID (286 aa)) constitute a PKS/mFAS DH domain. Residue H956 is the Proton acceptor; for dehydratase activity of the active site. The segment at 1059–1209 (NWSTLKREQL…IASTLSTNID (151 aa)) is C-terminal hotdog fold. The active-site Proton donor; for dehydratase activity is the D1121. Positions 2414–2491 (EKEFSIRQDI…QIINIVTTKV (78 aa)) constitute a Carrier domain. The residue at position 2451 (S2451) is an O-(pantetheine 4'-phosphoryl)serine.

It depends on pantetheine 4'-phosphate as a cofactor.

Functionally, probable polyketide synthase. The chain is Probable polyketide synthase 23 (pks23) from Dictyostelium discoideum (Social amoeba).